A 907-amino-acid polypeptide reads, in one-letter code: Catenin alpha-1 (907 aa).

Threonine 2 carries the post-translational modification N-acetylthreonine. Residues 2–228 are involved in homodimerization; sequence TAVHAGNINF…PILYTASQAC (227 aa). A Glycyl lysine isopeptide (Lys-Gly) (interchain with G-Cter in SUMO2) cross-link involves residue lysine 57. The interaction with JUP and CTNNB1 stretch occupies residues 97–148; sequence VRKQGDLMKSAAGEFADDPCSSVKRGNMVRAARALLSAVTRLLILADMADVY. 4 positions are modified to phosphoserine: serine 264, serine 268, serine 296, and serine 298. The interval 326–395 is interaction with alpha-actinin; the sequence is TRDDRRERIV…AVMDHVSDSF (70 aa). Threonine 635 bears the Phosphothreonine mark. Serine 642 carries the phosphoserine modification. Residue threonine 646 is modified to Phosphothreonine. Serine 653 and serine 656 each carry phosphoserine. Threonine 659 is modified (phosphothreonine). Lysine 798 participates in a covalent cross-link: Glycyl lysine isopeptide (Lys-Gly) (interchain with G-Cter in SUMO2). The residue at position 852 (serine 852) is a Phosphoserine. Positions 865–881 are enriched in basic and acidic residues; that stretch reads PEKKPLVKREKQDETQT. Residues 865–895 form a disordered region; sequence PEKKPLVKREKQDETQTKIKRASQKKHVNPV. Residues 882-892 show a composition bias toward basic residues; sequence KIKRASQKKHV.

Belongs to the vinculin/alpha-catenin family. Monomer and homodimer; the monomer preferentially binds to CTNNB1 and the homodimer to actin. Component of an cadherin:catenin adhesion complex composed of at least of CDH26, beta-catenin/CTNNB1, alpha-catenin/CTNNA1 and p120 catenin/CTNND1. Possible component of an E-cadherin/ catenin adhesion complex together with E-cadherin/CDH1 and beta-catenin/CTNNB1 or gamma-catenin/JUP; the complex is located to adherens junctions. The stable association of CTNNA1 is controversial as CTNNA1 was shown not to bind to F-actin when assembled in the complex. Alternatively, the CTNNA1-containing complex may be linked to F-actin by other proteins such as LIMA1. Binds AFDN and F-actin. Interacts with ARHGAP21. Interacts with AJUBA. Interacts with LIMA1. Interacts with vinculin/VCL. Interacts with TJP2/ZO2 (via N-terminus). Interacts with TJP1/ZO1 (via N-terminus). Post-translationally, sumoylated. Phosphorylation seems to contribute to the strength of cell-cell adhesion rather than to the basic capacity for cell-cell adhesion.

The protein resides in the cytoplasm. It localises to the cytoskeleton. The protein localises to the cell junction. Its subcellular location is the adherens junction. It is found in the cell membrane. The protein resides in the nucleus. Its function is as follows. Associates with the cytoplasmic domain of a variety of cadherins. The association of catenins to cadherins produces a complex which is linked to the actin filament network, and which seems to be of primary importance for cadherins cell-adhesion properties. Can associate with both E- and N-cadherins. Originally believed to be a stable component of E-cadherin/catenin adhesion complexes and to mediate the linkage of cadherins to the actin cytoskeleton at adherens junctions. In contrast, cortical actin was found to be much more dynamic than E-cadherin/catenin complexes and CTNNA1 was shown not to bind to F-actin when assembled in the complex suggesting a different linkage between actin and adherens junctions components. The homodimeric form may regulate actin filament assembly and inhibit actin branching by competing with the Arp2/3 complex for binding to actin filaments. Involved in the regulation of WWTR1/TAZ, YAP1 and TGFB1-dependent SMAD2 and SMAD3 nuclear accumulation. May play a crucial role in cell differentiation. This Oryctolagus cuniculus (Rabbit) protein is Catenin alpha-1.